Here is a 447-residue protein sequence, read N- to C-terminus: Putative branched-chain amino acid carrier protein SAUSA300_1300 (447 aa).

Helical transmembrane passes span 6 to 26 (WVIGFTLFAMFFGAGNLIFPP), 40 to 60 (ILAFVLTGIGLPLLGVIVGAL), 74 to 94 (PKFSILFLIIIYLTIGPLFAI), 114 to 134 (SSIALFIFTIIYFIVVLYICL), 143 to 163 (IGSLLTPLLLITILAMIIKGY), 193 to 213 (GYLTMDAIAAIAFSMIVVNAV), 229 to 249 (LTAGLIAAVALIFIYISLGYI), 290 to 310 (LLGIIVALACLTTACGLIVAV), 326 to 346 (FVLVFILMSFIIANQGLNAVI), 350 to 370 (IPVLSIVYPVAITVVLLILIA), 382 to 402 (IPVIIVFILSIFSVISKLGWL), and 417 to 437 (LEWFPVAIIATILGYLVGIFV).

The protein belongs to the branched chain amino acid transporter family.

The protein resides in the cell membrane. In terms of biological role, component of the transport system for branched-chain amino acids (leucine, isoleucine and valine), which is coupled to a proton motive force (Potential). Contributes to NaCl tolerance. This chain is Putative branched-chain amino acid carrier protein SAUSA300_1300, found in Staphylococcus aureus (strain USA300).